The chain runs to 391 residues: Phosphoglycerate kinase (391 aa).

Substrate is bound by residues 21–23 (DLN), Arg36, 59–62 (HLGR), Arg113, and Arg146. Residues Lys197, Glu319, and 345–348 (GGDT) contribute to the ATP site.

The protein belongs to the phosphoglycerate kinase family. As to quaternary structure, monomer.

It localises to the cytoplasm. It catalyses the reaction (2R)-3-phosphoglycerate + ATP = (2R)-3-phospho-glyceroyl phosphate + ADP. It participates in carbohydrate degradation; glycolysis; pyruvate from D-glyceraldehyde 3-phosphate: step 2/5. This is Phosphoglycerate kinase from Pseudoalteromonas translucida (strain TAC 125).